We begin with the raw amino-acid sequence, 311 residues long: Cytochrome f (311 aa).

The signal sequence occupies residues 1 to 27; the sequence is MRRHLSLLIGSLVLGLSLLIAPAASWA. Positions 28, 48, 51, and 52 each coordinate heme. Residues 277–297 traverse the membrane as a helical segment; it reads IYGLLAFFAAVALAQIMLVLK.

This sequence belongs to the cytochrome f family. The 4 large subunits of the cytochrome b6-f complex are cytochrome b6, subunit IV (17 kDa polypeptide, PetD), cytochrome f and the Rieske protein, while the 4 small subunits are PetG, PetL, PetM and PetN. The complex functions as a dimer. Requires heme as cofactor.

The protein resides in the cellular thylakoid membrane. In terms of biological role, component of the cytochrome b6-f complex, which mediates electron transfer between photosystem II (PSII) and photosystem I (PSI), cyclic electron flow around PSI, and state transitions. The protein is Cytochrome f of Parasynechococcus marenigrum (strain WH8102).